The sequence spans 166 residues: Protein-export protein SecB (166 aa).

This sequence belongs to the SecB family. Homotetramer, a dimer of dimers. One homotetramer interacts with 1 SecA dimer.

The protein resides in the cytoplasm. One of the proteins required for the normal export of preproteins out of the cell cytoplasm. It is a molecular chaperone that binds to a subset of precursor proteins, maintaining them in a translocation-competent state. It also specifically binds to its receptor SecA. The sequence is that of Protein-export protein SecB from Sinorhizobium fredii (strain NBRC 101917 / NGR234).